The primary structure comprises 204 residues: NADH-quinone oxidoreductase subunit C (204 aa).

It belongs to the complex I 30 kDa subunit family. In terms of assembly, NDH-1 is composed of 14 different subunits. Subunits NuoB, C, D, E, F, and G constitute the peripheral sector of the complex.

Its subcellular location is the cell inner membrane. The catalysed reaction is a quinone + NADH + 5 H(+)(in) = a quinol + NAD(+) + 4 H(+)(out). Its function is as follows. NDH-1 shuttles electrons from NADH, via FMN and iron-sulfur (Fe-S) centers, to quinones in the respiratory chain. The immediate electron acceptor for the enzyme in this species is believed to be ubiquinone. Couples the redox reaction to proton translocation (for every two electrons transferred, four hydrogen ions are translocated across the cytoplasmic membrane), and thus conserves the redox energy in a proton gradient. The polypeptide is NADH-quinone oxidoreductase subunit C (Rhodopseudomonas palustris (strain ATCC BAA-98 / CGA009)).